Reading from the N-terminus, the 161-residue chain is Lipoprotein signal peptidase (161 aa).

The next 3 helical transmembrane spans lie at 9–29, 64–84, and 96–113; these read WLWLSLVVITLDLFSKYLVVE, WQKYLFLTLAIIISFILANVL, and MAYALIIGGAIGNAIDRA. Residues Asp120 and Asp138 contribute to the active site. A helical membrane pass occupies residues 133–153; it reads VFNIADVAIVMGAGLLILETF.

Belongs to the peptidase A8 family.

The protein resides in the cell inner membrane. The catalysed reaction is Release of signal peptides from bacterial membrane prolipoproteins. Hydrolyzes -Xaa-Yaa-Zaa-|-(S,diacylglyceryl)Cys-, in which Xaa is hydrophobic (preferably Leu), and Yaa (Ala or Ser) and Zaa (Gly or Ala) have small, neutral side chains.. It functions in the pathway protein modification; lipoprotein biosynthesis (signal peptide cleavage). Its function is as follows. This protein specifically catalyzes the removal of signal peptides from prolipoproteins. The polypeptide is Lipoprotein signal peptidase (Haemophilus ducreyi (strain 35000HP / ATCC 700724)).